Here is a 198-residue protein sequence, read N- to C-terminus: Protein hunchback (198 aa).

2 disordered regions span residues 16–111 and 152–198; these read SHHH…LPGL and NDKL…KYMA. Basic residues predominate over residues 17-31; sequence HHHHHHHAHHSHHQH. Composition is skewed to low complexity over residues 35-46 and 56-83; these read SNSNSNASSPHQ and SNTN…QQQQ. Over residues 95–105 the composition is skewed to polar residues; it reads PSPSNNDQNSP. Residues 179 to 198 show a composition bias toward basic and acidic residues; that stretch reads EPEKEHDLMSNSSEDMKYMA.

The protein belongs to the hunchback C2H2-type zinc-finger protein family.

The protein localises to the nucleus. Gap class segmentation protein that controls development of head structures. In Drosophila lineosetae (Fruit fly), this protein is Protein hunchback (hb).